A 440-amino-acid polypeptide reads, in one-letter code: Gap junction gamma-2 protein (440 aa).

Residues methionine 1–threonine 21 lie on the Cytoplasmic side of the membrane. Residues phenylalanine 22–glycine 42 traverse the membrane as a helical segment. At glycine 43–arginine 78 the chain is on the extracellular side. Residues phenylalanine 79–valine 99 traverse the membrane as a helical segment. At histidine 100–glutamate 223 the chain is on the cytoplasmic side. The interval glutamine 108 to glycine 199 is disordered. Basic residues predominate over residues arginine 112–proline 124. Residues proline 136–alanine 149 are compositionally biased toward low complexity. The span at leucine 150–alanine 173 shows a compositional bias: acidic residues. A helical transmembrane segment spans residues valine 224 to cysteine 244. Residues serine 245–threonine 264 lie on the Extracellular side of the membrane. The chain crosses the membrane as a helical span at residues valine 265–methionine 285. Residues alanine 286–isoleucine 440 lie on the Cytoplasmic side of the membrane. A disordered region spans residues aspartate 369–isoleucine 440. Phosphoserine is present on serine 372. Low complexity predominate over residues valine 388–glycine 401.

The protein belongs to the connexin family. Gamma-type subfamily. A connexon is composed of a hexamer of connexins. Interacts with TJP1. As to expression, mainly expressed by oligodendrocytes in the central nervous system (at protein level).

It localises to the cell membrane. It is found in the cell junction. Its subcellular location is the gap junction. Its function is as follows. One gap junction consists of a cluster of closely packed pairs of transmembrane channels, the connexons, through which materials of low MW diffuse from one cell to a neighboring cell. May play a role in myelination in central and peripheral nervous systems. This chain is Gap junction gamma-2 protein (Gjc2), found in Mus musculus (Mouse).